Here is a 479-residue protein sequence, read N- to C-terminus: Ribosomal RNA small subunit methyltransferase F (479 aa).

S-adenosyl-L-methionine-binding positions include 125–131, glutamate 149, aspartate 176, and aspartate 194; that span reads AAAPGSK. The Nucleophile role is filled by cysteine 247.

This sequence belongs to the class I-like SAM-binding methyltransferase superfamily. RsmB/NOP family.

It localises to the cytoplasm. The catalysed reaction is cytidine(1407) in 16S rRNA + S-adenosyl-L-methionine = 5-methylcytidine(1407) in 16S rRNA + S-adenosyl-L-homocysteine + H(+). Specifically methylates the cytosine at position 1407 (m5C1407) of 16S rRNA. This Salmonella agona (strain SL483) protein is Ribosomal RNA small subunit methyltransferase F.